The following is a 132-amino-acid chain: Small ribosomal subunit protein uS8 (132 aa).

It belongs to the universal ribosomal protein uS8 family. In terms of assembly, part of the 30S ribosomal subunit. Contacts proteins S5 and S12.

Functionally, one of the primary rRNA binding proteins, it binds directly to 16S rRNA central domain where it helps coordinate assembly of the platform of the 30S subunit. This Lactobacillus johnsonii (strain CNCM I-12250 / La1 / NCC 533) protein is Small ribosomal subunit protein uS8.